Reading from the N-terminus, the 393-residue chain is NAD(P)H-quinone oxidoreductase subunit H, chloroplastic (393 aa).

It belongs to the complex I 49 kDa subunit family. In terms of assembly, NDH is composed of at least 16 different subunits, 5 of which are encoded in the nucleus.

The protein localises to the plastid. Its subcellular location is the chloroplast thylakoid membrane. It catalyses the reaction a plastoquinone + NADH + (n+1) H(+)(in) = a plastoquinol + NAD(+) + n H(+)(out). The catalysed reaction is a plastoquinone + NADPH + (n+1) H(+)(in) = a plastoquinol + NADP(+) + n H(+)(out). In terms of biological role, NDH shuttles electrons from NAD(P)H:plastoquinone, via FMN and iron-sulfur (Fe-S) centers, to quinones in the photosynthetic chain and possibly in a chloroplast respiratory chain. The immediate electron acceptor for the enzyme in this species is believed to be plastoquinone. Couples the redox reaction to proton translocation, and thus conserves the redox energy in a proton gradient. The polypeptide is NAD(P)H-quinone oxidoreductase subunit H, chloroplastic (Guizotia abyssinica (Niger)).